Reading from the N-terminus, the 71-residue chain is Large ribosomal subunit protein bL31 (71 aa).

4 residues coordinate Zn(2+): C16, C18, C37, and C40.

It belongs to the bacterial ribosomal protein bL31 family. Type A subfamily. Part of the 50S ribosomal subunit. The cofactor is Zn(2+).

Binds the 23S rRNA. The chain is Large ribosomal subunit protein bL31 from Serratia proteamaculans (strain 568).